A 286-amino-acid chain; its full sequence is Neuferricin homolog (286 aa).

An N-terminal signal peptide occupies residues 1–23; it reads MFGFVKYLFKLQFLFILAAVLAG. The 85-residue stretch at 61 to 145 folds into the Cytochrome b5 heme-binding domain; the sequence is ATVLTSAELS…KPNDLLGLAN (85 aa). The stretch at 176–200 forms a coiled coil; sequence HKYLALLEQAQIAKAEVDELRSKYP.

It belongs to the cytochrome b5 family. MAPR subfamily.

It localises to the secreted. Functionally, heme-binding protein. The protein is Neuferricin homolog of Drosophila pseudoobscura pseudoobscura (Fruit fly).